A 125-amino-acid chain; its full sequence is Holo-[acyl-carrier-protein] synthase (125 aa).

The Mg(2+) site is built by D8 and E57.

The protein belongs to the P-Pant transferase superfamily. AcpS family. It depends on Mg(2+) as a cofactor.

The protein resides in the cytoplasm. The enzyme catalyses apo-[ACP] + CoA = holo-[ACP] + adenosine 3',5'-bisphosphate + H(+). Its function is as follows. Transfers the 4'-phosphopantetheine moiety from coenzyme A to a Ser of acyl-carrier-protein. This chain is Holo-[acyl-carrier-protein] synthase, found in Nitrosospira multiformis (strain ATCC 25196 / NCIMB 11849 / C 71).